The primary structure comprises 937 residues: Protein translocase subunit SecA (937 aa).

Residues Q90, 108 to 112 (GEGKT), and D509 contribute to the ATP site.

The protein belongs to the SecA family. Monomer and homodimer. Part of the essential Sec protein translocation apparatus which comprises SecA, SecYEG and auxiliary proteins SecDF. Other proteins may also be involved.

The protein resides in the cell inner membrane. Its subcellular location is the cellular thylakoid membrane. It localises to the cytoplasm. It catalyses the reaction ATP + H2O + cellular proteinSide 1 = ADP + phosphate + cellular proteinSide 2.. Functionally, part of the Sec protein translocase complex. Interacts with the SecYEG preprotein conducting channel. Has a central role in coupling the hydrolysis of ATP to the transfer of proteins into and across the cell membrane, serving as an ATP-driven molecular motor driving the stepwise translocation of polypeptide chains across the membrane. Its function is as follows. Probably participates in protein translocation into and across both the cytoplasmic and thylakoid membranes in cyanobacterial cells. The sequence is that of Protein translocase subunit SecA from Synechococcus sp. (strain CC9902).